The chain runs to 1021 residues: Sodium/potassium-transporting ATPase subunit alpha-1 (1021 aa).

The propeptide occupies 1-5; that stretch reads MGKGG. Positions 1–11 are enriched in basic and acidic residues; sequence MGKGGGRDKYE. A disordered region spans residues 1–37; sequence MGKGGGRDKYEPAAISEHGNKKKAKKERDMDELKKEV. The Cytoplasmic segment spans residues 6–85; the sequence is GRDKYEPAAI…NALTPPPTTP (80 aa). The residue at position 9 (Lys9) is an N6-acetyllysine. Tyr10 is subject to Phosphotyrosine. Residue Ser16 is modified to Phosphoserine; by PKC. Residue Lys21 is modified to N6-acetyllysine. The segment covering 26–37 has biased composition (basic and acidic residues); the sequence is KERDMDELKKEV. 2 positions are modified to phosphoserine: Ser38 and Ser45. The segment at 80–82 is phosphoinositide-3 kinase binding; the sequence is PPP. Residues 86–106 form a helical membrane-spanning segment; it reads EWVKFCRQLFGGFSMLLWIGA. At 107–129 the chain is on the extracellular side; that stretch reads ILCFLAYGIQAATEEEPQNDNLY. The chain crosses the membrane as a helical span at residues 130–150; that stretch reads LGVVLSAVVIITGCFSYYQEA. At 151-286 the chain is on the cytoplasmic side; that stretch reads KSSKIMESFK…GGQTPIAAEI (136 aa). Residues 214–233 are disordered; the sequence is SSLTGESEPQTRSPDFTNEN. Position 226 is a phosphoserine (Ser226). Tyr258 carries the post-translational modification Phosphotyrosine. A helical membrane pass occupies residues 287-306; sequence EHFIHIITGVAVFLGVTFFI. The Extracellular segment spans residues 307 to 318; the sequence is LSLILEYTWLEA. Residues 319–336 traverse the membrane as a helical segment; the sequence is VIFLIGIIVANVPEGLLA. Residues 337–770 are Cytoplasmic-facing; that stretch reads TVTVCLTLTA…EEGRLIFDNL (434 aa). Asp374 functions as the 4-aspartylphosphate intermediate in the catalytic mechanism. Ser450 and Ser482 each carry phosphoserine. Lys485 contributes to the ATP binding site. Tyr540 bears the Phosphotyrosine mark. A mediates interaction with SCN7A region spans residues 594-715; sequence RAAVPDAVGK…QGAIVAVTGD (122 aa). Lys659 carries the post-translational modification N6-succinyllysine. Residue Ser666 is modified to Phosphoserine. Mg(2+)-binding residues include Asp715 and Asp719. A helical transmembrane segment spans residues 771-790; it reads KKSIAYTLTSNIPEITPFLI. At 791-800 the chain is on the extracellular side; that stretch reads FIIANIPLPL. Residues 801-821 traverse the membrane as a helical segment; it reads GTVTILCIDLGTDMVPAISLA. Residues 822–841 are Cytoplasmic-facing; the sequence is YEQAESDIMKRQPRNPQTDK. A helical transmembrane segment spans residues 842–864; it reads LVNERLISMAYGQIGMIQALGGF. At 865 to 916 the chain is on the extracellular side; that stretch reads FTYFVILAENGFLPIHLLGLRVDWDDRWVNDVEDSYGQQWTYEQRKIVEFTC. A helical transmembrane segment spans residues 917–936; it reads HTAFFVSIVVVQWADLVICK. At 937 to 949 the chain is on the cytoplasmic side; that stretch reads TRRNSVFQQGMKN. A Phosphoserine; by PKA modification is found at Ser941. The chain crosses the membrane as a helical span at residues 950-968; sequence KILIFGLFEETALAAFLSY. The Extracellular portion of the chain corresponds to 969 to 983; the sequence is CPGMGVALRMYPLKP. The helical transmembrane segment at 984–1004 threads the bilayer; that stretch reads TWWFCAFPYSLLIFVYDEVRK. Residues 1005–1021 are Cytoplasmic-facing; the sequence is LIIRRRPGGWVEKETYY.

This sequence belongs to the cation transport ATPase (P-type) (TC 3.A.3) family. Type IIC subfamily. As to quaternary structure, the sodium/potassium-transporting ATPase is composed of a catalytic alpha subunit, an auxiliary non-catalytic beta subunit and an additional regulatory subunit. Interacts with regulatory subunit FXYD1. Interacts with regulatory subunit FXYD3. Interacts with SIK1. Interacts with SLC35G1 and STIM1. Interacts with CLN3; this interaction regulates the sodium/potassium-transporting ATPase complex localization at the plasma membrane. Interacts with SCN7A; activates ATP1A1 P-type sodium:potassium-exchanging transporter activity which indirectly signals to nearby neurons to regulate sodium homeostasis. Post-translationally, phosphorylation on Tyr-10 modulates pumping activity. Phosphorylation of Ser-941 by PKA modulates the response of ATP1A1 to PKC. Dephosphorylation by protein phosphatase 2A (PP2A) following increases in intracellular sodium, leading to increase catalytic activity.

It localises to the cell membrane. It is found in the basolateral cell membrane. Its subcellular location is the sarcolemma. The protein localises to the cell projection. The protein resides in the axon. It localises to the melanosome. It carries out the reaction K(+)(out) + Na(+)(in) + ATP + H2O = K(+)(in) + Na(+)(out) + ADP + phosphate + H(+). Functionally, this is the catalytic component of the active enzyme, which catalyzes the hydrolysis of ATP coupled with the exchange of sodium and potassium ions across the plasma membrane. This action creates the electrochemical gradient of sodium and potassium ions, providing the energy for active transport of various nutrients. Could also be part of an osmosensory signaling pathway that senses body-fluid sodium levels and controls salt intake behavior as well as voluntary water intake to regulate sodium homeostasis. This chain is Sodium/potassium-transporting ATPase subunit alpha-1 (ATP1A1), found in Equus caballus (Horse).